The sequence spans 791 residues: Protein FAM47A (791 aa).

3 disordered regions span residues 195–257, 274–409, and 449–573; these read PVSH…TRRR, EDAR…TGVC, and VKKT…SEPP. Composition is skewed to basic and acidic residues over residues 274–288 and 333–342; these read EDAR…KTTD and GESHLRLEHS. A compositionally biased stretch (polar residues) spans 349-358; it reads SLRSEPSETG. Positions 449-462 are enriched in basic and acidic residues; sequence VKKTKEPTEPHKSP.

This sequence belongs to the FAM47 family.

This is Protein FAM47A (FAM47A) from Homo sapiens (Human).